We begin with the raw amino-acid sequence, 216 residues long: Probable transaldolase (216 aa).

Catalysis depends on Lys83, which acts as the Schiff-base intermediate with substrate.

This sequence belongs to the transaldolase family. Type 3B subfamily.

It localises to the cytoplasm. It carries out the reaction D-sedoheptulose 7-phosphate + D-glyceraldehyde 3-phosphate = D-erythrose 4-phosphate + beta-D-fructose 6-phosphate. Its pathway is carbohydrate degradation; pentose phosphate pathway; D-glyceraldehyde 3-phosphate and beta-D-fructose 6-phosphate from D-ribose 5-phosphate and D-xylulose 5-phosphate (non-oxidative stage): step 2/3. Functionally, transaldolase is important for the balance of metabolites in the pentose-phosphate pathway. This Clostridioides difficile (strain 630) (Peptoclostridium difficile) protein is Probable transaldolase.